The sequence spans 63 residues: uncharacterized protein (63 aa).

The span at methionine 1–histidine 17 shows a compositional bias: basic and acidic residues. A disordered region spans residues methionine 1 to threonine 32. The span at lysine 18–threonine 32 shows a compositional bias: polar residues.

This sequence to Y.enterocolitica HemP.

This is an uncharacterized protein from Escherichia coli (strain K12).